The primary structure comprises 395 residues: Phosphoglycerate kinase (395 aa).

Substrate contacts are provided by residues 21–23 (DLN), Arg-36, 59–62 (HLGR), Arg-114, and Arg-147. Residues Lys-198, Glu-320, and 346 to 349 (GGDT) contribute to the ATP site.

It belongs to the phosphoglycerate kinase family. Monomer.

The protein resides in the cytoplasm. The catalysed reaction is (2R)-3-phosphoglycerate + ATP = (2R)-3-phospho-glyceroyl phosphate + ADP. It functions in the pathway carbohydrate degradation; glycolysis; pyruvate from D-glyceraldehyde 3-phosphate: step 2/5. The protein is Phosphoglycerate kinase of Nitrosospira multiformis (strain ATCC 25196 / NCIMB 11849 / C 71).